Reading from the N-terminus, the 469-residue chain is UDP-N-acetylmuramate--L-alanine ligase (469 aa).

113 to 119 (GAHGKTT) provides a ligand contact to ATP.

Belongs to the MurCDEF family.

It localises to the cytoplasm. It catalyses the reaction UDP-N-acetyl-alpha-D-muramate + L-alanine + ATP = UDP-N-acetyl-alpha-D-muramoyl-L-alanine + ADP + phosphate + H(+). The protein operates within cell wall biogenesis; peptidoglycan biosynthesis. Its function is as follows. Cell wall formation. The chain is UDP-N-acetylmuramate--L-alanine ligase from Syntrophobacter fumaroxidans (strain DSM 10017 / MPOB).